Reading from the N-terminus, the 205-residue chain is Pectinesterase inhibitor 3 (205 aa).

The signal sequence occupies residues 1–25 (MAPTQNLFLVAIAFAVIFTASTVHG). 2 disulfide bridges follow: Cys-38/Cys-47 and Cys-104/Cys-156.

This sequence belongs to the PMEI family. In terms of tissue distribution, expressed in apical meristem.

It is found in the secreted. Its subcellular location is the extracellular space. It localises to the apoplast. Its function is as follows. Pectin methylesterase (PME) inhibitor that can target PMEs (e.g. PME2 and PME3) in a pH-dependent manner, mainly in slightly acidic conditions (pH 6.3 and 5.0) but not at pH 7.5; this processus relies on changes in the protonation of amino acids involved in intermolecular and intramolecular interactions. Regulates de-methylesterification of pectins in the apical meristem and affects primordia formation and phyllotactic patterning. The protein is Pectinesterase inhibitor 3 of Arabidopsis thaliana (Mouse-ear cress).